The primary structure comprises 146 residues: MIF-like protein mif-3 (146 aa).

It belongs to the MIF family.

The polypeptide is MIF-like protein mif-3 (mif-3) (Caenorhabditis elegans).